A 481-amino-acid polypeptide reads, in one-letter code: ATP synthase subunit beta, chloroplastic (481 aa).

162–169 serves as a coordination point for ATP; it reads GGAGVGKT.

This sequence belongs to the ATPase alpha/beta chains family. In terms of assembly, F-type ATPases have 2 components, CF(1) - the catalytic core - and CF(0) - the membrane proton channel. CF(1) has five subunits: alpha(3), beta(3), gamma(1), delta(1), epsilon(1). CF(0) has four main subunits: a(1), b(1), b'(1) and c(9-12).

The protein resides in the plastid. Its subcellular location is the chloroplast thylakoid membrane. It catalyses the reaction ATP + H2O + 4 H(+)(in) = ADP + phosphate + 5 H(+)(out). In terms of biological role, produces ATP from ADP in the presence of a proton gradient across the membrane. The catalytic sites are hosted primarily by the beta subunits. The sequence is that of ATP synthase subunit beta, chloroplastic from Chlorella vulgaris (Green alga).